Reading from the N-terminus, the 1233-residue chain is MGTKWTEEQKQAITTRGSNLLVAAAAGSGKTAVLVERIINLITDEENPVDIDRLLVVTFTNAAASEMRERIAEALIAILDQNPEDKRLANQLTLLNKATITTIHSFCLEVVRNNFFLLDLDPNFRIGDDTETLLLQLEASEELFEEMYAKEDKDKEGFLTLVESYGGTKDDQDLQDILLRLYGFVRSLPWPEKWLKDVINTFRVEDNFKFETSKWAEVILDSLKVEISGILNTMLVAVDKLKNEAGLEGYFHAFQREAYEIEQLLQYDNWNEFKNHIQAIEFERLPNAGKDANKNVKEEVSNIRKKVKDKIKEIKEKFFSDSVEEIKDEIKALYPIMEALADLILLFDKKYKEKKREKGIIDFNDIEHFALQILTEIDEEGDVNPSEVALHYREKFEEIFVDEYQDSNLIQEEILSIIARENPPNRFMVGDVKQSIYRFRQANPYIFFEKYNSYSLDTGEKNQKILLYKNFRSRIEVIEAINYIFKKIMSKNIGEVNYTEEEKLNYGAEYEIPPEDSVTGGAVELHLIEKQKVEEEVEEKEEEKNEEKDFEEEEEDLIDDIQVEARVVAERIKQLFSQNFMVYDKNIKSYRAVDYRDIVVLLRATDRWAPVFLEELTQAGIPAFADTGTGYFDTTEIKTIISLLQVIDNPMQDIPLLAVLRSPIFSFTEEELIDLRLEDMEKTIYEAIKKASQREDELGEKAKNFLDTLKKWQEKAVYMPVDEFLWYLYKDTGYYSYVAAMPQGVQRQANLRILFERAKQYEETSFKGLFNFINFINRLKVSSGDMGSAKIVGENEKVVRIMSIHKSKGLEFPVVIVAGLGKQFNTKDLYQKILYHHFLGLGPEFVDFRRRISYPSIVKEAIKYKIKLEGLSEEMRVLYVALTRAKEKLILVGSARDIKKNVRKWANAAILQEKVSEYDILNGKSYMDWIGAAVIRHKDLEPLREFAGVSLSEEEDASKWEVKLWNKKDVLLEKEKNDKVDVVERLRSLDLDAHYSEFYKEVERRLNYVYPYEKACYLPAKLSVTEVKRILNAEVVDEDTTSIFEREVLKTPIFLEKKKGLTAAEKGIAMHLVMQKLDLDKDLSLEGIKEQIKDMVDREILTEEQAKEVNIHKIEGFFKTSLGERMLSSKNVKREVPFHIKLSSREIYKDLPEEYENEFIQVQGIIDCFFEEEDGLVLIDYKTDYVQEGKVEEIKERYKVQIELYSKALENITGKKVKEKYIYLFFNGNILEY.

In terms of domain architecture, UvrD-like helicase ATP-binding spans 3–474 (TKWTEEQKQA…ILLYKNFRSR (472 aa)). ATP is bound at residue 24–31 (AAAGSGKT). The UvrD-like helicase C-terminal domain maps to 518 to 809 (VTGGAVELHL…RIMSIHKSKG (292 aa)). Positions 533 to 555 (VEEEVEEKEEEKNEEKDFEEEEE) are disordered.

This sequence belongs to the helicase family. AddA subfamily. In terms of assembly, heterodimer of AddA and AddB/RexB. Mg(2+) is required as a cofactor.

The catalysed reaction is Couples ATP hydrolysis with the unwinding of duplex DNA by translocating in the 3'-5' direction.. It catalyses the reaction ATP + H2O = ADP + phosphate + H(+). Functionally, the heterodimer acts as both an ATP-dependent DNA helicase and an ATP-dependent, dual-direction single-stranded exonuclease. Recognizes the chi site generating a DNA molecule suitable for the initiation of homologous recombination. The AddA nuclease domain is required for chi fragment generation; this subunit has the helicase and 3' -&gt; 5' nuclease activities. In Thermoanaerobacter sp. (strain X514), this protein is ATP-dependent helicase/nuclease subunit A.